The chain runs to 276 residues: Ribosomal RNA small subunit methyltransferase A (276 aa).

6 residues coordinate S-adenosyl-L-methionine: Asn16, Leu18, Gly43, Glu64, Asp89, and Asn109.

Belongs to the class I-like SAM-binding methyltransferase superfamily. rRNA adenine N(6)-methyltransferase family. RsmA subfamily.

It is found in the cytoplasm. It catalyses the reaction adenosine(1518)/adenosine(1519) in 16S rRNA + 4 S-adenosyl-L-methionine = N(6)-dimethyladenosine(1518)/N(6)-dimethyladenosine(1519) in 16S rRNA + 4 S-adenosyl-L-homocysteine + 4 H(+). Its function is as follows. Specifically dimethylates two adjacent adenosines (A1518 and A1519) in the loop of a conserved hairpin near the 3'-end of 16S rRNA in the 30S particle. May play a critical role in biogenesis of 30S subunits. The chain is Ribosomal RNA small subunit methyltransferase A from Marinobacter nauticus (strain ATCC 700491 / DSM 11845 / VT8) (Marinobacter aquaeolei).